The primary structure comprises 469 residues: Glutamate--tRNA ligase (469 aa).

The 'HIGH' region signature appears at 9–19 (PSPTGFLHVGG). Zn(2+) contacts are provided by C98, C100, C125, and D127. The 'KMSKS' region signature appears at 236–240 (KLSKR). ATP is bound at residue K239.

This sequence belongs to the class-I aminoacyl-tRNA synthetase family. Glutamate--tRNA ligase type 1 subfamily. Monomer. It depends on Zn(2+) as a cofactor.

The protein resides in the cytoplasm. The catalysed reaction is tRNA(Glu) + L-glutamate + ATP = L-glutamyl-tRNA(Glu) + AMP + diphosphate. Its function is as follows. Catalyzes the attachment of glutamate to tRNA(Glu) in a two-step reaction: glutamate is first activated by ATP to form Glu-AMP and then transferred to the acceptor end of tRNA(Glu). This chain is Glutamate--tRNA ligase, found in Shewanella sp. (strain MR-4).